Consider the following 690-residue polypeptide: Protein arginine N-methyltransferase 7 (690 aa).

SAM-dependent MTase PRMT-type domains follow at residues 14 to 357 (QNSW…YSLW) and 366 to 690 (TKSV…QKKL).

This sequence belongs to the class I-like SAM-binding methyltransferase superfamily. Protein arginine N-methyltransferase family. PRMT7 subfamily.

Functionally, essential arginine methyltransferase that can both catalyze the formation of omega-N monomethylarginine (MMA) and symmetrical dimethylarginine (sDMA). Specifically mediates the symmetrical dimethylation of arginine residues in the small nuclear ribonucleoproteins SmD1 and SmD3. The polypeptide is Protein arginine N-methyltransferase 7 (Art7) (Drosophila erecta (Fruit fly)).